A 190-amino-acid polypeptide reads, in one-letter code: C-type lectin domain family 5 member A (190 aa).

Topologically, residues 1–4 (MNWH) are cytoplasmic. Residues 5–25 (MIISGLIVVVIKVVGMTFFLL) form a helical; Signal-anchor for type II membrane protein membrane-spanning segment. The Extracellular segment spans residues 26–190 (YFPQVFGKSN…YRWICEMNAK (165 aa)). N-linked (GlcNAc...) asparagine glycans are attached at residues N51, N146, and N153. Residues 80 to 186 (HQGKCFFFSF…CEVSYRWICE (107 aa)) enclose the C-type lectin domain. Cystine bridges form between C101–C185 and C163–C177.

Monomer. Homodimer. The majority of CLEC5A is expressed as a monomeric form on macrophages. Interacts with TYROBP/DAP12. The interaction with TYROBP is required for CLEC5 cell surface expression. Interacts with HCST/DAP10. Forms a CLEC5A/TYROBP/HCST trimolecular complex depending almost solely on TYROBP. N-glycosylated. Contains sialic acid residues. Strong expression in bone marrow cells and thioglycollate-induced neutrophils (at protein level). Expressed on granulocytes and monocytes from bone marrow and peripheral blood. Expressed in macrophage cell line J-774, but not in T-cell lines, B-cell lines, or mast cell lines.

Its subcellular location is the cell membrane. Its function is as follows. Functions as a positive regulator of osteoclastogenesis. Cell surface receptor that signals via TYROBP. Regulates inflammatory responses. The protein is C-type lectin domain family 5 member A (Clec5a) of Mus musculus (Mouse).